The following is an 80-amino-acid chain: Putative membrane protein insertion efficiency factor (80 aa).

This sequence belongs to the UPF0161 family.

Its subcellular location is the cell inner membrane. Its function is as follows. Could be involved in insertion of integral membrane proteins into the membrane. This Picosynechococcus sp. (strain ATCC 27264 / PCC 7002 / PR-6) (Agmenellum quadruplicatum) protein is Putative membrane protein insertion efficiency factor.